The sequence spans 632 residues: tRNA uridine 5-carboxymethylaminomethyl modification enzyme MnmG (632 aa).

Residues 15–20 (GAGHAG), Ile-127, and Ser-182 each bind FAD. 276–290 (GPRYCPSIEDKIVRF) lines the NAD(+) pocket. Gln-373 is a binding site for FAD.

This sequence belongs to the MnmG family. Homodimer. Heterotetramer of two MnmE and two MnmG subunits. FAD is required as a cofactor.

Its subcellular location is the cytoplasm. Its function is as follows. NAD-binding protein involved in the addition of a carboxymethylaminomethyl (cmnm) group at the wobble position (U34) of certain tRNAs, forming tRNA-cmnm(5)s(2)U34. This Streptococcus pyogenes serotype M12 (strain MGAS2096) protein is tRNA uridine 5-carboxymethylaminomethyl modification enzyme MnmG.